The sequence spans 166 residues: MRLILLSGLLLLGTFLANGHDTDPEGQMLNSVIESVMILQREFANLKHAFLTVHKARSFGSGSERLYVSNKEIGKFEALKEICDQAGGHIPSPQFENQNKAFANVLERHNKEAYLVVDDPANFTNWAAGQPNEADGTCVKADTHGSWHSASCDDNLLVVCEFYFIL.

The N-terminal stretch at 1-19 is a signal peptide; sequence MRLILLSGLLLLGTFLANG. One can recognise a C-type lectin domain in the interval 46-161; sequence LKHAFLTVHK…CDDNLLVVCE (116 aa). Disulfide bonds link Cys-83/Cys-160 and Cys-138/Cys-152. An N-linked (GlcNAc...) asparagine glycan is attached at Asn-122.

The protein belongs to the alpha-type phospholipase A2 inhibitor family. As to quaternary structure, homotrimer; non-covalently linked. Expressed by the liver.

It localises to the secreted. Functionally, this phospholipase A2 inhibitor binds directly phospholipase A2 in the presence or absence of calcium. The chain is Phospholipase A2 inhibitor clone 02/03/06/07 from Lachesis muta muta (Bushmaster).